Consider the following 834-residue polypeptide: Glycerol-3-phosphate acyltransferase (834 aa).

An HXXXXD motif motif is present at residues 304–309 (CHRSHM). A disordered region spans residues 800 to 834 (SVSMPAETSNQPEAPETPETPETPETPEPEGKTES).

Belongs to the GPAT/DAPAT family.

Its subcellular location is the cell inner membrane. The catalysed reaction is sn-glycerol 3-phosphate + an acyl-CoA = a 1-acyl-sn-glycero-3-phosphate + CoA. It participates in phospholipid metabolism; CDP-diacylglycerol biosynthesis; CDP-diacylglycerol from sn-glycerol 3-phosphate: step 1/3. The protein is Glycerol-3-phosphate acyltransferase of Yersinia pseudotuberculosis serotype I (strain IP32953).